The primary structure comprises 397 residues: MRDTRFPCLCGIAASTLLFATTPAIAGEAPADRLKALVDAAVQPVMKANDIPGLAVAISLKGEPHYFSYGLASKEDGRRVTPETLFEIGSVSKTFTATLAGYALTQDKMRLDDRASQHWPALQGSRFDGISLLDLATYTAGGLPLQFPDSVQKDQAQIRDYYRQWQPTYAPGSQRLYSNPSIGLFGYLAARSLGQPFERLMEQQVFPALGLEQTHLDVPEAALAQYAQGYGKDDRPLRVGPGPLDAEGYGVKTSAADLLRFVDANLHPERLDRPWAQALDATHRGYYKVGDMTQGLGWEAYDWPISLKRLQAGNSTPMALQPHRIARLPAPQALEGQRLLNKTGSTNGFGAYVAFVPGRDLGLVILANRNYPNAERVKIAYAILSGLEQQGKVPLKR.

An N-terminal signal peptide occupies residues 1-26 (MRDTRFPCLCGIAASTLLFATTPAIA). The active-site Acyl-ester intermediate is S90. S90, Q146, Y177, N179, and N370 together coordinate a beta-lactam. Y177 functions as the Proton acceptor in the catalytic mechanism.

This sequence belongs to the class-C beta-lactamase family. In terms of assembly, monomer.

The protein localises to the periplasm. It carries out the reaction a beta-lactam + H2O = a substituted beta-amino acid. Class C beta-lactamase which confers resistance to penicillins and cephalosporins. Has nitrocefin-hydrolyzing activity. The protein is Beta-lactamase (ampC) of Pseudomonas aeruginosa (strain ATCC 15692 / DSM 22644 / CIP 104116 / JCM 14847 / LMG 12228 / 1C / PRS 101 / PAO1).